A 32-amino-acid chain; its full sequence is Photosystem II reaction center protein T (32 aa).

Residues 3–23 form a helical membrane-spanning segment; it reads TLVYTFLLIGTLAVLFAAVFF.

The protein belongs to the PsbT family. As to quaternary structure, PSII is composed of 1 copy each of membrane proteins PsbA, PsbB, PsbC, PsbD, PsbE, PsbF, PsbH, PsbI, PsbJ, PsbK, PsbL, PsbM, PsbT, PsbX, PsbY, PsbZ, Psb30/Ycf12, at least 3 peripheral proteins of the oxygen-evolving complex and a large number of cofactors. It forms dimeric complexes.

The protein localises to the plastid. The protein resides in the chloroplast thylakoid membrane. In terms of biological role, found at the monomer-monomer interface of the photosystem II (PS II) dimer, plays a role in assembly and dimerization of PSII. PSII is a light-driven water plastoquinone oxidoreductase, using light energy to abstract electrons from H(2)O, generating a proton gradient subsequently used for ATP formation. The chain is Photosystem II reaction center protein T from Guillardia theta (Cryptophyte).